Reading from the N-terminus, the 481-residue chain is uncharacterized protein (481 aa).

13 consecutive transmembrane segments (helical) span residues 3–23, 33–53, 75–95, 99–119, 122–142, 155–175, 196–216, 241–261, 264–284, 303–323, 351–371, 400–420, and 443–463; these read YLPM…LLHG, FITA…YYYF, QAII…GMGE, NNMF…IVLA, IFNL…LVFL, YMIM…FLLA, IYGG…LPPF, FVLV…DYFA, HAVL…MALL, VATG…FHAI, GGLL…KLAI, IIMI…FYLI, and VFSL…PDIV.

The protein localises to the cell membrane. This is an uncharacterized protein from Methanocaldococcus jannaschii (strain ATCC 43067 / DSM 2661 / JAL-1 / JCM 10045 / NBRC 100440) (Methanococcus jannaschii).